A 155-amino-acid polypeptide reads, in one-letter code: Regulatory protein RecX (155 aa).

Belongs to the RecX family.

Its subcellular location is the cytoplasm. In terms of biological role, modulates RecA activity. The chain is Regulatory protein RecX from Vibrio campbellii (strain ATCC BAA-1116).